A 485-amino-acid polypeptide reads, in one-letter code: Lysine--tRNA ligase (485 aa).

Residues E391 and E398 each contribute to the Mg(2+) site.

Belongs to the class-II aminoacyl-tRNA synthetase family. As to quaternary structure, homodimer. Mg(2+) is required as a cofactor.

The protein resides in the cytoplasm. The catalysed reaction is tRNA(Lys) + L-lysine + ATP = L-lysyl-tRNA(Lys) + AMP + diphosphate. The polypeptide is Lysine--tRNA ligase (Blochmanniella floridana).